The sequence spans 355 residues: UDP-3-O-acylglucosamine N-acyltransferase (355 aa).

The Proton acceptor role is filled by histidine 258.

It belongs to the transferase hexapeptide repeat family. LpxD subfamily. In terms of assembly, homotrimer.

It carries out the reaction a UDP-3-O-[(3R)-3-hydroxyacyl]-alpha-D-glucosamine + a (3R)-hydroxyacyl-[ACP] = a UDP-2-N,3-O-bis[(3R)-3-hydroxyacyl]-alpha-D-glucosamine + holo-[ACP] + H(+). The protein operates within bacterial outer membrane biogenesis; LPS lipid A biosynthesis. Functionally, catalyzes the N-acylation of UDP-3-O-acylglucosamine using 3-hydroxyacyl-ACP as the acyl donor. Is involved in the biosynthesis of lipid A, a phosphorylated glycolipid that anchors the lipopolysaccharide to the outer membrane of the cell. The chain is UDP-3-O-acylglucosamine N-acyltransferase from Bradyrhizobium sp. (strain ORS 278).